The chain runs to 572 residues: Dihydroxy-acid dehydratase (572 aa).

Residue cysteine 54 coordinates [2Fe-2S] cluster. Aspartate 86 is a Mg(2+) binding site. Residue cysteine 127 participates in [2Fe-2S] cluster binding. Mg(2+)-binding residues include aspartate 128 and lysine 129. Residue lysine 129 is modified to N6-carboxylysine. Cysteine 199 serves as a coordination point for [2Fe-2S] cluster. Position 449 (glutamate 449) interacts with Mg(2+). Serine 475 functions as the Proton acceptor in the catalytic mechanism.

The protein belongs to the IlvD/Edd family. In terms of assembly, homodimer. [2Fe-2S] cluster is required as a cofactor. The cofactor is Mg(2+).

The enzyme catalyses (2R)-2,3-dihydroxy-3-methylbutanoate = 3-methyl-2-oxobutanoate + H2O. The catalysed reaction is (2R,3R)-2,3-dihydroxy-3-methylpentanoate = (S)-3-methyl-2-oxopentanoate + H2O. Its pathway is amino-acid biosynthesis; L-isoleucine biosynthesis; L-isoleucine from 2-oxobutanoate: step 3/4. The protein operates within amino-acid biosynthesis; L-valine biosynthesis; L-valine from pyruvate: step 3/4. Its function is as follows. Functions in the biosynthesis of branched-chain amino acids. Catalyzes the dehydration of (2R,3R)-2,3-dihydroxy-3-methylpentanoate (2,3-dihydroxy-3-methylvalerate) into 2-oxo-3-methylpentanoate (2-oxo-3-methylvalerate) and of (2R)-2,3-dihydroxy-3-methylbutanoate (2,3-dihydroxyisovalerate) into 2-oxo-3-methylbutanoate (2-oxoisovalerate), the penultimate precursor to L-isoleucine and L-valine, respectively. The protein is Dihydroxy-acid dehydratase of Pelagibacter ubique (strain HTCC1062).